A 134-amino-acid polypeptide reads, in one-letter code: Methylglyoxal synthase (134 aa).

Residues 1 to 134 (MNIALIAHDN…DWRERVKERG (134 aa)) form the MGS-like domain. Substrate is bound by residues His-8, Lys-12, 34–37 (TGTT), and 54–55 (SG). Asp-60 acts as the Proton donor/acceptor in catalysis. His-87 lines the substrate pocket.

The protein belongs to the methylglyoxal synthase family.

The enzyme catalyses dihydroxyacetone phosphate = methylglyoxal + phosphate. Functionally, catalyzes the formation of methylglyoxal from dihydroxyacetone phosphate. This chain is Methylglyoxal synthase, found in Alkaliphilus metalliredigens (strain QYMF).